The chain runs to 104 residues: MVSGMSTDEEKEGTSDEEVNEEKEVEETSEDEFPKLSIQDIELLMRNTEIWDNLLNGKITLEEAKKLFEDNYKEYEKRDSRRKAKKAVSKKVKKTKKKEKSVEG.

Disordered stretches follow at residues 1 to 33 (MVSG…EDEF) and 78 to 104 (RDSR…SVEG). Residues 7–31 (TDEEKEGTSDEEVNEEKEVEETSED) are compositionally biased toward acidic residues. The span at 80–104 (SRRKAKKAVSKKVKKTKKKEKSVEG) shows a compositional bias: basic residues.

This sequence belongs to the archaeal Rpo13 RNA polymerase subunit family. As to quaternary structure, part of the 13-subunit RNA polymerase complex.

Its subcellular location is the cytoplasm. It catalyses the reaction RNA(n) + a ribonucleoside 5'-triphosphate = RNA(n+1) + diphosphate. DNA-dependent RNA polymerase (RNAP) catalyzes the transcription of DNA into RNA using the four ribonucleoside triphosphates as substrates. Probably binds dsDNA. This Saccharolobus solfataricus (strain ATCC 35092 / DSM 1617 / JCM 11322 / P2) (Sulfolobus solfataricus) protein is DNA-directed RNA polymerase subunit Rpo13.